The following is a 71-amino-acid chain: Small ribosomal subunit protein bS21 (71 aa).

Residues 39–71 form a disordered region; sequence EKPTQERKRKAAAAVKRQMRRTSRDVTKRKRLY. A compositionally biased stretch (basic residues) spans 45-71; it reads RKRKAAAAVKRQMRRTSRDVTKRKRLY.

This sequence belongs to the bacterial ribosomal protein bS21 family.

The polypeptide is Small ribosomal subunit protein bS21 (Xylella fastidiosa (strain M12)).